Reading from the N-terminus, the 122-residue chain is Large ribosomal subunit protein uL18 (122 aa).

A compositionally biased stretch (basic residues) spans 1–19; sequence MSTLSRKQKTQKRHKRLRR. A disordered region spans residues 1–26; sequence MSTLSRKQKTQKRHKRLRRNLSGTDQ.

Belongs to the universal ribosomal protein uL18 family. As to quaternary structure, part of the 50S ribosomal subunit; part of the 5S rRNA/L5/L18/L25 subcomplex. Contacts the 5S and 23S rRNAs.

Its function is as follows. This is one of the proteins that bind and probably mediate the attachment of the 5S RNA into the large ribosomal subunit, where it forms part of the central protuberance. In Prochlorococcus marinus (strain SARG / CCMP1375 / SS120), this protein is Large ribosomal subunit protein uL18.